The sequence spans 94 residues: uncharacterized protein (94 aa).

This is an uncharacterized protein from Escherichia coli (strain K12).